Here is a 184-residue protein sequence, read N- to C-terminus: Oocyte-secreted protein 4A (184 aa).

Positions 1 to 19 (MKISCVLGKLLMLFELIHG) are cleaved as a signal peptide. A glycan (N-linked (GlcNAc...) asparagine) is linked at N128.

The protein belongs to the PLAC1 family.

The protein resides in the secreted. This Homo sapiens (Human) protein is Oocyte-secreted protein 4A.